A 342-amino-acid chain; its full sequence is Anthranilate phosphoribosyltransferase (342 aa).

Residues G83, 86–87 (GD), T91, 93–96 (NIST), 111–119 (KHGNRGVSS), and S123 each bind 5-phospho-alpha-D-ribose 1-diphosphate. Residue G83 participates in anthranilate binding. A Mg(2+)-binding site is contributed by S95. N114 lines the anthranilate pocket. R169 is an anthranilate binding site. Positions 228 and 229 each coordinate Mg(2+).

It belongs to the anthranilate phosphoribosyltransferase family. Homodimer. Mg(2+) is required as a cofactor.

The catalysed reaction is N-(5-phospho-beta-D-ribosyl)anthranilate + diphosphate = 5-phospho-alpha-D-ribose 1-diphosphate + anthranilate. Its pathway is amino-acid biosynthesis; L-tryptophan biosynthesis; L-tryptophan from chorismate: step 2/5. Catalyzes the transfer of the phosphoribosyl group of 5-phosphorylribose-1-pyrophosphate (PRPP) to anthranilate to yield N-(5'-phosphoribosyl)-anthranilate (PRA). The sequence is that of Anthranilate phosphoribosyltransferase from Paraburkholderia phymatum (strain DSM 17167 / CIP 108236 / LMG 21445 / STM815) (Burkholderia phymatum).